A 236-amino-acid chain; its full sequence is 5'-methylthioadenosine/S-adenosylhomocysteine nucleosidase (236 aa).

Glu-12 (proton acceptor) is an active-site residue. Substrate-binding positions include Gly-78, Ile-153, and 174-175; that span reads ME. Catalysis depends on Asp-198, which acts as the Proton donor.

This sequence belongs to the PNP/UDP phosphorylase family. MtnN subfamily.

It catalyses the reaction S-adenosyl-L-homocysteine + H2O = S-(5-deoxy-D-ribos-5-yl)-L-homocysteine + adenine. The catalysed reaction is S-methyl-5'-thioadenosine + H2O = 5-(methylsulfanyl)-D-ribose + adenine. The enzyme catalyses 5'-deoxyadenosine + H2O = 5-deoxy-D-ribose + adenine. The protein operates within amino-acid biosynthesis; L-methionine biosynthesis via salvage pathway; S-methyl-5-thio-alpha-D-ribose 1-phosphate from S-methyl-5'-thioadenosine (hydrolase route): step 1/2. Catalyzes the irreversible cleavage of the glycosidic bond in both 5'-methylthioadenosine (MTA) and S-adenosylhomocysteine (SAH/AdoHcy) to adenine and the corresponding thioribose, 5'-methylthioribose and S-ribosylhomocysteine, respectively. Also cleaves 5'-deoxyadenosine, a toxic by-product of radical S-adenosylmethionine (SAM) enzymes, into 5-deoxyribose and adenine. This chain is 5'-methylthioadenosine/S-adenosylhomocysteine nucleosidase, found in Shewanella oneidensis (strain ATCC 700550 / JCM 31522 / CIP 106686 / LMG 19005 / NCIMB 14063 / MR-1).